The primary structure comprises 262 residues: Adenosylcobinamide-GDP ribazoletransferase (262 aa).

6 consecutive transmembrane segments (helical) span residues 43 to 63 (YFGL…WLTQ), 66 to 86 (LPAG…TGGF), 120 to 140 (GALA…ELAL), 146 to 166 (AGSA…SIIF), 191 to 211 (LLIL…LAAL), and 242 to 262 (AAQQ…GNIL).

Belongs to the CobS family. Requires Mg(2+) as cofactor.

The protein resides in the cell inner membrane. It carries out the reaction alpha-ribazole + adenosylcob(III)inamide-GDP = adenosylcob(III)alamin + GMP + H(+). The catalysed reaction is alpha-ribazole 5'-phosphate + adenosylcob(III)inamide-GDP = adenosylcob(III)alamin 5'-phosphate + GMP + H(+). It participates in cofactor biosynthesis; adenosylcobalamin biosynthesis; adenosylcobalamin from cob(II)yrinate a,c-diamide: step 7/7. In terms of biological role, joins adenosylcobinamide-GDP and alpha-ribazole to generate adenosylcobalamin (Ado-cobalamin). Also synthesizes adenosylcobalamin 5'-phosphate from adenosylcobinamide-GDP and alpha-ribazole 5'-phosphate. The polypeptide is Adenosylcobinamide-GDP ribazoletransferase (Shewanella baltica (strain OS195)).